The following is a 695-amino-acid chain: DNA ligase (695 aa).

Residues 44–48 (DAEYD), 93–94 (SL), and glutamate 124 contribute to the NAD(+) site. Lysine 126 (N6-AMP-lysine intermediate) is an active-site residue. NAD(+) contacts are provided by arginine 147, glutamate 187, lysine 304, and lysine 328. Residues cysteine 422, cysteine 425, cysteine 440, and cysteine 445 each coordinate Zn(2+). The 90-residue stretch at 606–695 (TVQGPLAGKT…GIEVEAAARS (90 aa)) folds into the BRCT domain.

This sequence belongs to the NAD-dependent DNA ligase family. LigA subfamily. Requires Mg(2+) as cofactor. It depends on Mn(2+) as a cofactor.

It carries out the reaction NAD(+) + (deoxyribonucleotide)n-3'-hydroxyl + 5'-phospho-(deoxyribonucleotide)m = (deoxyribonucleotide)n+m + AMP + beta-nicotinamide D-nucleotide.. Its function is as follows. DNA ligase that catalyzes the formation of phosphodiester linkages between 5'-phosphoryl and 3'-hydroxyl groups in double-stranded DNA using NAD as a coenzyme and as the energy source for the reaction. It is essential for DNA replication and repair of damaged DNA. The sequence is that of DNA ligase from Thermomicrobium roseum (strain ATCC 27502 / DSM 5159 / P-2).